A 596-amino-acid chain; its full sequence is Chloride intracellular channel protein 6 (596 aa).

The disordered stretch occupies residues 1–360; the sequence is MAEATEPKEV…ALEEGDPGQE (360 aa). Over residues 34–48 the composition is skewed to basic and acidic residues; that stretch reads LEGREASEEAAEAPR. A Phosphoserine modification is found at Ser-40. Positions 65 to 74 are enriched in gly residues; sequence GCGQDEGTGG. Low complexity predominate over residues 83–98; it reads GPEAETPGASGAPGEA. Residues 118–130 are compositionally biased toward polar residues; it reads SAQQVQGMSSGLD. Residues 148 to 160 are compositionally biased toward acidic residues; that stretch reads DPTASEAGEEAES. Low complexity-rich tracts occupy residues 197–213 and 225–244; these read GSES…PQPQ and GGNE…AGEG. A compositionally biased stretch (basic and acidic residues) spans 246–290; it reads TLGKDGSEEAASEDARVDAHENGDQGKLQEETGEEEARPEPELKG. Ser-304 is modified (phosphoserine). Over residues 338–348 the composition is skewed to basic and acidic residues; the sequence is ELGRVNGRREN. Residues 379 to 382 carry the G-site motif; the sequence is CPFS. Residues 381–401 traverse the membrane as a helical segment; it reads FSQRLFMILWLKGVIFNVTTV. One can recognise a GST C-terminal domain in the interval 425–596; it reads DGEVKTDVNK…AYSDAAKRMK (172 aa).

Belongs to the chloride channel CLIC family. In terms of assembly, monomer (soluble state). Interacts with dopamine receptors DRD2, DRD3 and DRD4. Phosphorylated.

It is found in the cytoplasm. It localises to the cell membrane. It catalyses the reaction chloride(in) = chloride(out). Its activity is regulated as follows. Channel activity is redox- and pH-regulated. Inhibited by IAA-94. Functionally, in the soluble state, catalyzes glutaredoxin-like thiol disulfide exchange reactions with reduced glutathione as electron donor. Can insert into membranes and form voltage-dependent chloride-selective channels. The channel opens upon membrane depolarization at positive voltages and closes at negative membrane voltages. May play a critical role in water-secreting cells, possibly through the regulation of chloride ion transport. The chain is Chloride intracellular channel protein 6 (Clic6) from Mus musculus (Mouse).